The chain runs to 59 residues: UPF0391 membrane protein Geob_0344 (59 aa).

Transmembrane regions (helical) follow at residues 4 to 24 and 33 to 53; these read WAAIFFIIAIVAAVFGFTGIA and FLFILFLVVALIMLILGITAG.

Belongs to the UPF0391 family.

The protein resides in the cell membrane. This is UPF0391 membrane protein Geob_0344 from Geotalea daltonii (strain DSM 22248 / JCM 15807 / FRC-32) (Geobacter daltonii).